The following is a 177-amino-acid chain: Nicotinamide-nucleotide adenylyltransferase (177 aa).

This sequence belongs to the archaeal NMN adenylyltransferase family.

The protein resides in the cytoplasm. It carries out the reaction beta-nicotinamide D-ribonucleotide + ATP + H(+) = diphosphate + NAD(+). It functions in the pathway cofactor biosynthesis; NAD(+) biosynthesis; NAD(+) from nicotinamide D-ribonucleotide: step 1/1. This is Nicotinamide-nucleotide adenylyltransferase from Halobacterium salinarum (strain ATCC 29341 / DSM 671 / R1).